The primary structure comprises 226 residues: Ribonuclease 3 (226 aa).

Positions 6–128 (INRLQRKLGY…LIGGVFLDSN (123 aa)) constitute an RNase III domain. Glu-41 contacts Mg(2+). The active site involves Asp-45. The Mg(2+) site is built by Asp-114 and Glu-117. Residue Glu-117 is part of the active site. The region spanning 155–225 (DPKTRLQEYL…AEQALKKLEL (71 aa)) is the DRBM domain.

This sequence belongs to the ribonuclease III family. Homodimer. It depends on Mg(2+) as a cofactor.

The protein resides in the cytoplasm. The enzyme catalyses Endonucleolytic cleavage to 5'-phosphomonoester.. Its function is as follows. Digests double-stranded RNA. Involved in the processing of primary rRNA transcript to yield the immediate precursors to the large and small rRNAs (23S and 16S). Processes some mRNAs, and tRNAs when they are encoded in the rRNA operon. Processes pre-crRNA and tracrRNA of type II CRISPR loci if present in the organism. The protein is Ribonuclease 3 of Salmonella typhi.